The following is a 154-amino-acid chain: Myoglobin (154 aa).

Residues 2–148 (VLSEGEWQLV…FRKDIAAKYK (147 aa)) form the Globin domain. S4 is modified (phosphoserine). H65 contributes to the nitrite binding site. H65 lines the O2 pocket. T68 carries the post-translational modification Phosphothreonine. Residue H94 participates in heme b binding.

This sequence belongs to the globin family. As to quaternary structure, monomeric.

It localises to the cytoplasm. Its subcellular location is the sarcoplasm. It carries out the reaction Fe(III)-heme b-[protein] + nitric oxide + H2O = Fe(II)-heme b-[protein] + nitrite + 2 H(+). The enzyme catalyses H2O2 + AH2 = A + 2 H2O. In terms of biological role, monomeric heme protein which primary function is to store oxygen and facilitate its diffusion within muscle tissues. Reversibly binds oxygen through a pentacoordinated heme iron and enables its timely and efficient release as needed during periods of heightened demand. Depending on the oxidative conditions of tissues and cells, and in addition to its ability to bind oxygen, it also has a nitrite reductase activity whereby it regulates the production of bioactive nitric oxide. Under stress conditions, like hypoxia and anoxia, it also protects cells against reactive oxygen species thanks to its pseudoperoxidase activity. This chain is Myoglobin (MB), found in Kogia breviceps (Pygmy sperm whale).